The chain runs to 184 residues: Large ribosomal subunit protein uL6 (184 aa).

It belongs to the universal ribosomal protein uL6 family. In terms of assembly, part of the 50S ribosomal subunit.

This protein binds to the 23S rRNA, and is important in its secondary structure. It is located near the subunit interface in the base of the L7/L12 stalk, and near the tRNA binding site of the peptidyltransferase center. The protein is Large ribosomal subunit protein uL6 of Thermococcus kodakarensis (strain ATCC BAA-918 / JCM 12380 / KOD1) (Pyrococcus kodakaraensis (strain KOD1)).